The following is a 214-amino-acid chain: Adenylate kinase (214 aa).

An ATP-binding site is contributed by 10–15 (GAGKGT). Positions 30–59 (STGDMLRAAIKAGTELGKQAKSVIDAGQLV) are NMP. AMP contacts are provided by residues Thr-31, Arg-36, 57–59 (QLV), 85–88 (GFPR), and Gln-92. The LID stretch occupies residues 122–159 (GRRAHLPSGRTYHVVYNPPKEEGKDDETGEPLVIREDD). ATP contacts are provided by residues Arg-123 and 132-133 (TY). 2 residues coordinate AMP: Arg-156 and Arg-167. Position 200 (Lys-200) interacts with ATP.

It belongs to the adenylate kinase family. In terms of assembly, monomer.

It is found in the cytoplasm. It carries out the reaction AMP + ATP = 2 ADP. It functions in the pathway purine metabolism; AMP biosynthesis via salvage pathway; AMP from ADP: step 1/1. Its function is as follows. Catalyzes the reversible transfer of the terminal phosphate group between ATP and AMP. Plays an important role in cellular energy homeostasis and in adenine nucleotide metabolism. This Aliivibrio fischeri (strain ATCC 700601 / ES114) (Vibrio fischeri) protein is Adenylate kinase.